Consider the following 216-residue polypeptide: Adenylate kinase (216 aa).

10 to 15 (GAGKGT) serves as a coordination point for ATP. The tract at residues 30-59 (STGDMLRAAVKAGTPLGLELKKVMDAGQLV) is NMP. Residues Thr31, Arg36, 57 to 59 (QLV), 85 to 88 (GFPR), and Gln92 contribute to the AMP site. The tract at residues 122 to 159 (GRRVHLASGRTYHIQYNPPKVEGKDDETGEDLIQRDDD) is LID. ATP is bound by residues Arg123 and 132 to 133 (TY). 2 residues coordinate AMP: Arg156 and Arg167. An ATP-binding site is contributed by Gly202.

The protein belongs to the adenylate kinase family. In terms of assembly, monomer.

Its subcellular location is the cytoplasm. The enzyme catalyses AMP + ATP = 2 ADP. Its pathway is purine metabolism; AMP biosynthesis via salvage pathway; AMP from ADP: step 1/1. Functionally, catalyzes the reversible transfer of the terminal phosphate group between ATP and AMP. Plays an important role in cellular energy homeostasis and in adenine nucleotide metabolism. In Pseudomonas putida (strain ATCC 700007 / DSM 6899 / JCM 31910 / BCRC 17059 / LMG 24140 / F1), this protein is Adenylate kinase.